A 433-amino-acid polypeptide reads, in one-letter code: Zinc finger protein CONSTANS-LIKE 15 (433 aa).

Residues C9, C12, C32, H37, C52, C55, C75, and H80 each contribute to the Zn(2+) site. The B box-type 1; atypical zinc-finger motif lies at 9-51 (CDFCGERTAVLFCRADTAKLCLPCDQQVHTANLLSRKHVRSQI). Residues 52–94 (CDNCGNEPVSVRCFTDNLILCQECDWDVHGSCSVSDAHVRSAV) form a B box-type 2; atypical zinc finger. The tract at residues 319 to 353 (DDYKRSTSGQVQPTKSESNNRPITFGSEKGSNSSS) is disordered. Over residues 324 to 340 (STSGQVQPTKSESNNRP) the composition is skewed to polar residues. Residues 374-398 (TKADLERLAQNRGDAMQRYKEKRKT) are a coiled coil. Positions 385 to 427 (RGDAMQRYKEKRKTRRYDKTIRYESRKARADTRLRVRGRFVKA) constitute a CCT domain.

It belongs to the CONSTANS family.

Its subcellular location is the nucleus. The polypeptide is Zinc finger protein CONSTANS-LIKE 15 (COL15) (Arabidopsis thaliana (Mouse-ear cress)).